Consider the following 457-residue polypeptide: Carboxypeptidase N catalytic chain (457 aa).

A signal peptide spans 1 to 23 (MPDLPSAFLPLLLLSKFVTPVTF). Residues 24 to 338 (RHHRYDDLVR…EALIQFLEQV (315 aa)) form the Peptidase M14 domain. Cysteines 42 and 104 form a disulfide. 3 residues coordinate Zn(2+): His-86, Glu-89, and His-216. Residues Cys-271 and Cys-311 are joined by a disulfide bond. The Proton donor/acceptor role is filled by Glu-308. O-linked (GalNAc...) threonine glycans are attached at residues Thr-400, Thr-402, and Thr-409. The tract at residues 418 to 457 (SSSQVYPVQRAPGRGQGGRAKQPRTSRKKDPATKRHRGPA) is disordered.

It belongs to the peptidase M14 family. As to quaternary structure, tetramer of two catalytic chains and two glycosylated inactive chains. Zn(2+) serves as cofactor. As to expression, mainly expressed in liver. Also detected in lung, stomach, intestine, spleen and kidney.

The protein resides in the secreted. The protein localises to the extracellular space. It carries out the reaction Release of a C-terminal basic amino acid, preferentially lysine.. Protects the body from potent vasoactive and inflammatory peptides containing C-terminal Arg or Lys (such as kinins or anaphylatoxins) which are released into the circulation. This chain is Carboxypeptidase N catalytic chain (Cpn1), found in Mus musculus (Mouse).